The primary structure comprises 758 residues: 5-methyltetrahydropteroyltriglutamate--homocysteine methyltransferase (758 aa).

Residues 16 to 19 (RELK) and Lys112 contribute to the 5-methyltetrahydropteroyltri-L-glutamate site. L-homocysteine contacts are provided by residues 433-435 (IGS) and Glu486. Residues 433 to 435 (IGS) and Glu486 contribute to the L-methionine site. 5-methyltetrahydropteroyltri-L-glutamate contacts are provided by residues 517-518 (RC) and Trp563. Position 601 (Asp601) interacts with L-homocysteine. Asp601 lines the L-methionine pocket. Residue Glu607 participates in 5-methyltetrahydropteroyltri-L-glutamate binding. Residues His643, Cys645, and Glu667 each contribute to the Zn(2+) site. The active-site Proton donor is His696. Cys728 lines the Zn(2+) pocket.

It belongs to the vitamin-B12 independent methionine synthase family. It depends on Zn(2+) as a cofactor.

The enzyme catalyses 5-methyltetrahydropteroyltri-L-glutamate + L-homocysteine = tetrahydropteroyltri-L-glutamate + L-methionine. It participates in amino-acid biosynthesis; L-methionine biosynthesis via de novo pathway; L-methionine from L-homocysteine (MetE route): step 1/1. Functionally, catalyzes the transfer of a methyl group from 5-methyltetrahydrofolate to homocysteine resulting in methionine formation. The protein is 5-methyltetrahydropteroyltriglutamate--homocysteine methyltransferase of Neisseria meningitidis serogroup B (strain ATCC BAA-335 / MC58).